We begin with the raw amino-acid sequence, 189 residues long: GMP synthase [glutamine-hydrolyzing] subunit A (189 aa).

In terms of domain architecture, Glutamine amidotransferase type-1 spans 1 to 189; that stretch reads MIVILNNGGQ…CKKCGFGFEE (189 aa). Cys76 acts as the Nucleophile in catalysis. Residues His163 and Glu165 contribute to the active site.

As to quaternary structure, heterodimer composed of a glutamine amidotransferase subunit (A) and a GMP-binding subunit (B).

It catalyses the reaction XMP + L-glutamine + ATP + H2O = GMP + L-glutamate + AMP + diphosphate + 2 H(+). Its pathway is purine metabolism; GMP biosynthesis; GMP from XMP (L-Gln route): step 1/1. Catalyzes the synthesis of GMP from XMP. This Methanococcus maripaludis (strain DSM 14266 / JCM 13030 / NBRC 101832 / S2 / LL) protein is GMP synthase [glutamine-hydrolyzing] subunit A.